A 341-amino-acid polypeptide reads, in one-letter code: Phenazine O-methyltransferase PhzM (341 aa).

Residues Asp-205 and 231–233 (GDF) contribute to the S-adenosyl-L-methionine site. His-251 serves as the catalytic Proton acceptor.

This sequence belongs to the class I-like SAM-binding methyltransferase superfamily. Cation-independent O-methyltransferase family. In terms of assembly, homodimer.

The catalysed reaction is 1,6-dihydroxyphenazine + S-adenosyl-L-methionine = 1-hydroxy-6-methoxyphenazine + S-adenosyl-L-homocysteine + H(+). The enzyme catalyses 1-hydroxy-6-methoxyphenazine + S-adenosyl-L-methionine = 1,6-dimethoxyphenazine + S-adenosyl-L-homocysteine + H(+). It catalyses the reaction 1-hydroxy-6-methoxyphenazine N(10)-oxide + S-adenosyl-L-methionine = 1,6-dimethoxyphenazine N(5)-oxide + S-adenosyl-L-homocysteine. It carries out the reaction 1,6-dihydroxyphenazine N(5),N(10)-dioxide + S-adenosyl-L-methionine = 1-hydroxy-6-methoxyphenazine N(5),N(10)-dioxide + S-adenosyl-L-homocysteine. The catalysed reaction is 1-hydroxy-6-methoxyphenazine N(5),N(10)-dioxide + S-adenosyl-L-methionine = 1,6-dimethoxyphenazine N(5),N(10)-dioxide + S-adenosyl-L-homocysteine. In terms of biological role, involved in the biosynthesis of phenazine natural products including myxin, an N(5),N(10)-dioxide phenazine antiobiotic, which has antimicrobial activity. O-methyltransferase, which converts iodinin (1,6-dihydroxyphenazine N(5),N(10)-dioxide) to myxin (1-hydroxy-6-methoxyphenazine N(5),N(10)-dioxide). Catalyzes both monomethoxy and dimethoxy formation of phenazine natural compounds. Acts on a wide variety of substrates, catalyzing O-methylation of phenazines with non-, mono- or di-N-oxide. Highest activity with 1,6-dihydroxyphenazine (DHP) as substrate. Less active with monohydroxy-containing and monohydroxy-monomethoxy-containing phenazines. Least active with non-phenazine substrates, such as 8-hydroxyquinoline and 6-hydroxyquinoline. Is not able to convert 1-hydroxyphenazine to 1-hydroxy-N5-methylphenazine (pyocyanine), hence does not function as an N-methyltransferase. The chain is Phenazine O-methyltransferase PhzM from Lysobacter antibioticus.